The chain runs to 404 residues: D-galactonate dehydratase family member PC1_0802 (404 aa).

Residues Asn-37 and His-122 each contribute to the substrate site. Tyr-159 functions as the Proton donor/acceptor in the catalytic mechanism. Asp-212 contributes to the Mg(2+) binding site. His-214 serves as the catalytic Proton donor/acceptor. Residues Glu-238 and Glu-264 each contribute to the Mg(2+) site. Substrate contacts are provided by Glu-264, Arg-285, His-314, Asp-318, and Glu-341.

The protein belongs to the mandelate racemase/muconate lactonizing enzyme family. GalD subfamily. The cofactor is Mg(2+).

It catalyses the reaction D-mannonate = 2-dehydro-3-deoxy-D-gluconate + H2O. Has low D-mannonate dehydratase activity (in vitro), suggesting that this is not a physiological substrate and that it has no significant role in D-mannonate degradation in vivo. Has no detectable activity with a panel of 70 other acid sugars (in vitro). This is D-galactonate dehydratase family member PC1_0802 from Pectobacterium carotovorum subsp. carotovorum (strain PC1).